A 217-amino-acid chain; its full sequence is LexA repressor (217 aa).

Positions 26-46 (FEEMKLALDLKSKSGIHRLIK) form a DNA-binding region, H-T-H motif. Residues S138 and K176 each act as for autocatalytic cleavage activity in the active site.

It belongs to the peptidase S24 family. As to quaternary structure, homodimer.

It catalyses the reaction Hydrolysis of Ala-|-Gly bond in repressor LexA.. Represses a number of genes involved in the response to DNA damage (SOS response), including recA and lexA. In the presence of single-stranded DNA, RecA interacts with LexA causing an autocatalytic cleavage which disrupts the DNA-binding part of LexA, leading to derepression of the SOS regulon and eventually DNA repair. The polypeptide is LexA repressor (Zymomonas mobilis subsp. mobilis (strain ATCC 31821 / ZM4 / CP4)).